A 48-amino-acid polypeptide reads, in one-letter code: SDCTLRNHDCTDDRHSCCRSKMFKDVCTCFYPSQAKKELCTCQQPKHL.

Intrachain disulfides connect Cys-3–Cys-18, Cys-10–Cys-27, Cys-17–Cys-42, and Cys-29–Cys-40.

It belongs to the neurotoxin 19 (CSTX) family. 12 subfamily. In terms of assembly, heterodimer of A and B chains; disulfide-linked. In terms of processing, contains 4 disulfide bonds. As to expression, expressed by the venom gland.

It is found in the secreted. The protein is Toxin CSTX-15 of Cupiennius salei (American wandering spider).